The following is a 174-amino-acid chain: Adenine phosphoribosyltransferase (174 aa).

This sequence belongs to the purine/pyrimidine phosphoribosyltransferase family. In terms of assembly, homodimer.

The protein localises to the cytoplasm. It carries out the reaction AMP + diphosphate = 5-phospho-alpha-D-ribose 1-diphosphate + adenine. It functions in the pathway purine metabolism; AMP biosynthesis via salvage pathway; AMP from adenine: step 1/1. Functionally, catalyzes a salvage reaction resulting in the formation of AMP, that is energically less costly than de novo synthesis. This Photobacterium profundum (strain SS9) protein is Adenine phosphoribosyltransferase.